An 802-amino-acid polypeptide reads, in one-letter code: Elongation factor G, mitochondrial (802 aa).

Residues 1–24 (MRYPSLARLPRRALSGLARAPVRL) constitute a mitochondrion transit peptide. Positions 100–387 (SRVRNIGIAA…GVIDYLPNPS (288 aa)) constitute a tr-type G domain. GTP-binding positions include 109 to 116 (AHIDSGKT), 185 to 189 (DTPGH), and 239 to 242 (NKMD).

The protein belongs to the TRAFAC class translation factor GTPase superfamily. Classic translation factor GTPase family. EF-G/EF-2 subfamily.

Its subcellular location is the mitochondrion. It functions in the pathway protein biosynthesis; polypeptide chain elongation. Mitochondrial GTPase that catalyzes the GTP-dependent ribosomal translocation step during translation elongation. During this step, the ribosome changes from the pre-translocational (PRE) to the post-translocational (POST) state as the newly formed A-site-bound peptidyl-tRNA and P-site-bound deacylated tRNA move to the P and E sites, respectively. Catalyzes the coordinated movement of the two tRNA molecules, the mRNA and conformational changes in the ribosome. The sequence is that of Elongation factor G, mitochondrial (mef1) from Aspergillus terreus (strain NIH 2624 / FGSC A1156).